The primary structure comprises 87 residues: Protein ORF3 (87 aa).

Positions 58-87 are disordered; sequence GALNNAPREPSAPPLSQTLSPRQVLARYQM. Positions 67–70 match the PTAP/PSAP motif motif; that stretch reads PSAP.

It belongs to the hepevirus ORF3 protein family. Palmitoylated in the N-terminus.

It localises to the host endoplasmic reticulum membrane. The protein localises to the host cytoplasm. It is found in the host cytoskeleton. Its subcellular location is the virion. The protein resides in the host cell membrane. Its function is as follows. Small multifunctional phosphoprotein involved in virion morphogenesis, egress and counteracting host innate immunity. This chain is Protein ORF3, found in Avian hepatitis E virus (isolate Chicken/California/Meng) (AHEV).